The chain runs to 515 residues: Maturase K (515 aa).

Belongs to the intron maturase 2 family. MatK subfamily.

Its subcellular location is the plastid. The protein resides in the chloroplast. Usually encoded in the trnK tRNA gene intron. Probably assists in splicing its own and other chloroplast group II introns. The polypeptide is Maturase K (Larix laricina (Tamarack)).